A 396-amino-acid polypeptide reads, in one-letter code: Ribosomal RNA large subunit methyltransferase I (396 aa).

Residues 2–81 (TVRLFLAKGR…EEINIEFFIR (80 aa)) enclose the PUA domain.

The protein belongs to the methyltransferase superfamily. RlmI family.

Its subcellular location is the cytoplasm. The catalysed reaction is cytidine(1962) in 23S rRNA + S-adenosyl-L-methionine = 5-methylcytidine(1962) in 23S rRNA + S-adenosyl-L-homocysteine + H(+). Its function is as follows. Specifically methylates the cytosine at position 1962 (m5C1962) of 23S rRNA. The protein is Ribosomal RNA large subunit methyltransferase I of Serratia proteamaculans (strain 568).